We begin with the raw amino-acid sequence, 405 residues long: Aspartic protease (405 aa).

Positions 1–21 (MISDTVIAILAVALVGSTVQA) are cleaved as a signal peptide. Residues 22 to 81 (APVDATATSTSGIIAVPISKSAAQLAREADPVVSLDWLKKTKAQAQYKHKQANARLHSKR) constitute a propeptide, removed in mature form. A Peptidase A1 domain is found at 97-402 (WTGPITIGGQ…DVGNARVGFA (306 aa)). Residue aspartate 113 is part of the active site. A disulfide bridge connects residues cysteine 126 and cysteine 131. The active site involves aspartate 290. Cysteine 332 and cysteine 366 are disulfide-bonded.

This sequence belongs to the peptidase A1 family.

It localises to the secreted. With respect to regulation, inhibited by pepstatin A. In terms of biological role, possesses acidic protease activity. Hydrolyzes casein and azoalbumin in vitro. The polypeptide is Aspartic protease (Phaffia rhodozyma (Yeast)).